Here is a 297-residue protein sequence, read N- to C-terminus: 3-mercaptopyruvate sulfurtransferase (297 aa).

Alanine 2 bears the N-acetylalanine mark. Residues 25–144 (ASQPLKLLDA…WLSQNLPISS (120 aa)) form the Rhodanese 1 domain. Serine 35 carries the post-translational modification Phosphoserine. Residue lysine 40 is modified to N6-acetyllysine; alternate. Lysine 40 carries the post-translational modification N6-succinyllysine; alternate. The tract at residues 145–160 (GKSPSEPAEFCAQLDP) is hinge. 2 positions are modified to N6-succinyllysine: lysine 146 and lysine 164. One can recognise a Rhodanese 2 domain in the interval 174-288 (DARRFQVVDA…WYMRAQPEHV (115 aa)). Arginine 188 lines the substrate pocket. Residue cysteine 248 is the Cysteine persulfide intermediate of the active site.

As to quaternary structure, monomer (active form). Homodimer; disulfide-linked (inactive form). The N-terminus is blocked. As to expression, expressed in liver, heart, kidney and brain. Localizes to tubular epithelium in the kidney, pericentral hepatocytes in the liver, cardiac cells in the heart and neuroglial cells in the brain. Also expressed in vascular endothelium of the thoracic aorta. Weak expression in lung and thymus.

The protein resides in the cytoplasm. It localises to the mitochondrion. The protein localises to the synapse. It is found in the synaptosome. The enzyme catalyses 2-oxo-3-sulfanylpropanoate + [thioredoxin]-dithiol = [thioredoxin]-disulfide + hydrogen sulfide + pyruvate + H(+). By oxidative stress, and thioredoxin. Under oxidative stress conditions, the catalytic cysteine site is converted to a sulfenate which inhibits the MPST enzyme activity. Reduced thioredoxin cleaves an intersubunit disulfide bond to turn on the redox switch and reactivate the enzyme. Inhibited by different oxidants, hydrogen peroxide and tetrathionate. Its function is as follows. Transfer of a sulfur ion to cyanide or to other thiol compounds. Also has weak rhodanese activity. Detoxifies cyanide and is required for thiosulfate biosynthesis. Acts as an antioxidant. In combination with cysteine aminotransferase (CAT), contributes to the catabolism of cysteine and is an important producer of hydrogen sulfide in the brain, retina and vascular endothelial cells. Hydrogen sulfide H(2)S is an important synaptic modulator, signaling molecule, smooth muscle contractor and neuroprotectant. Its production by the 3MST/CAT pathway is regulated by calcium ions. The sequence is that of 3-mercaptopyruvate sulfurtransferase (Mpst) from Rattus norvegicus (Rat).